Here is a 1066-residue protein sequence, read N- to C-terminus: Protein sts5 (1066 aa).

The span at 18 to 28 shows a compositional bias: low complexity; the sequence is QQDPSDAQSSP. 3 disordered regions span residues 18 to 40, 154 to 178, and 247 to 286; these read QQDP…SLTT, ATST…SPNS, and SNFR…RKNL. Over residues 29 to 40 the composition is skewed to polar residues; that stretch reads TFVPSANPSLTT. Phosphothreonine is present on threonine 157. Residues 168 to 178 show a composition bias toward low complexity; sequence HSVASVSSPNS. Threonine 262 carries the phosphothreonine modification. At serine 264 the chain carries Phosphoserine. Gly residues predominate over residues 270-280; that stretch reads SGSGFSSGGSG. A Phosphothreonine modification is found at threonine 377. Residues 454-480 form a disordered region; that stretch reads SSAANKERQTSSGNQGSSNNSGNDKPK. Low complexity predominate over residues 464 to 476; it reads SSGNQGSSNNSGN. The CSD2 domain occupies 482–556; that stretch reads VWFKPSDKRV…AQVSALLHDT (75 aa). In terms of domain architecture, RNB spans 618-934; the sequence is NINSSSATDF…VHYQLQLLLR (317 aa). The DIS3L2 C-terminal domain occupies 983 to 1033; it reads QDGLVCFVAPSYFDVFFPSLGMEKRVHLDLLNLTHVRFEEDQGILSLYDES.

The protein belongs to the RNR ribonuclease family. Interacts with serine/threonine phosphatase ppe1, protein kinase C and an osmosensing MAP kinase.

Its subcellular location is the cytoplasm. Functionally, required for the maintenance of cell shape during interphase. Required for localization of cortical actin to the growing tips before mitosis. This is Protein sts5 (sts5) from Schizosaccharomyces pombe (strain 972 / ATCC 24843) (Fission yeast).